The sequence spans 462 residues: Glycine--tRNA ligase (462 aa).

2 residues coordinate substrate: R94 and E143. ATP contacts are provided by residues 175-177 (RNE), 185-190 (FRTCEF), 259-260 (EL), and 308-311 (GLTR). 190–194 (FEQME) is a binding site for substrate. 304-308 (ETSAG) provides a ligand contact to substrate.

It belongs to the class-II aminoacyl-tRNA synthetase family. Homodimer.

Its subcellular location is the cytoplasm. The enzyme catalyses tRNA(Gly) + glycine + ATP = glycyl-tRNA(Gly) + AMP + diphosphate. Functionally, catalyzes the attachment of glycine to tRNA(Gly). This is Glycine--tRNA ligase from Treponema pallidum (strain Nichols).